Consider the following 853-residue polypeptide: DNA mismatch repair protein MutS (853 aa).

Position 614-621 (glycine 614–serine 621) interacts with ATP.

This sequence belongs to the DNA mismatch repair MutS family.

Functionally, this protein is involved in the repair of mismatches in DNA. It is possible that it carries out the mismatch recognition step. This protein has a weak ATPase activity. This chain is DNA mismatch repair protein MutS, found in Escherichia coli O6:K15:H31 (strain 536 / UPEC).